Consider the following 292-residue polypeptide: 1D-myo-inositol 2-acetamido-2-deoxy-alpha-D-glucopyranoside deacetylase (292 aa).

The Zn(2+) site is built by H12, D15, and H147.

This sequence belongs to the MshB deacetylase family. Zn(2+) is required as a cofactor.

The catalysed reaction is 1D-myo-inositol 2-acetamido-2-deoxy-alpha-D-glucopyranoside + H2O = 1D-myo-inositol 2-amino-2-deoxy-alpha-D-glucopyranoside + acetate. Its function is as follows. Catalyzes the deacetylation of 1D-myo-inositol 2-acetamido-2-deoxy-alpha-D-glucopyranoside (GlcNAc-Ins) in the mycothiol biosynthesis pathway. The sequence is that of 1D-myo-inositol 2-acetamido-2-deoxy-alpha-D-glucopyranoside deacetylase from Rhodococcus opacus (strain B4).